Here is a 128-residue protein sequence, read N- to C-terminus: Large ribosomal subunit protein bL12 (128 aa).

This sequence belongs to the bacterial ribosomal protein bL12 family. In terms of assembly, homodimer. Part of the ribosomal stalk of the 50S ribosomal subunit. Forms a multimeric L10(L12)X complex, where L10 forms an elongated spine to which 2 to 4 L12 dimers bind in a sequential fashion. Binds GTP-bound translation factors.

Forms part of the ribosomal stalk which helps the ribosome interact with GTP-bound translation factors. Is thus essential for accurate translation. In Halorhodospira halophila (strain DSM 244 / SL1) (Ectothiorhodospira halophila (strain DSM 244 / SL1)), this protein is Large ribosomal subunit protein bL12.